The following is a 226-amino-acid chain: Thiopurine S-methyltransferase (226 aa).

Tryptophan 16, methionine 51, glutamate 72, and arginine 131 together coordinate S-adenosyl-L-methionine.

It belongs to the class I-like SAM-binding methyltransferase superfamily. TPMT family.

The protein localises to the cytoplasm. It catalyses the reaction S-adenosyl-L-methionine + a thiopurine = S-adenosyl-L-homocysteine + a thiopurine S-methylether.. The polypeptide is Thiopurine S-methyltransferase (Francisella tularensis subsp. tularensis (strain SCHU S4 / Schu 4)).